Reading from the N-terminus, the 501-residue chain is Lysine--tRNA ligase (501 aa).

2 residues coordinate Mg(2+): glutamate 402 and glutamate 409.

The protein belongs to the class-II aminoacyl-tRNA synthetase family. As to quaternary structure, homodimer. Mg(2+) is required as a cofactor.

Its subcellular location is the cytoplasm. It catalyses the reaction tRNA(Lys) + L-lysine + ATP = L-lysyl-tRNA(Lys) + AMP + diphosphate. The sequence is that of Lysine--tRNA ligase from Helicobacter pylori (strain Shi470).